The chain runs to 349 residues: UDP-N-acetylenolpyruvoylglucosamine reductase (349 aa).

Residues 24-197 (FGIDATARFA…VAVTFRLPKR (174 aa)) form the FAD-binding PCMH-type domain. Residue Arg173 is part of the active site. The Proton donor role is filled by Ser249. Residue Glu345 is part of the active site.

Belongs to the MurB family. FAD serves as cofactor.

It is found in the cytoplasm. The enzyme catalyses UDP-N-acetyl-alpha-D-muramate + NADP(+) = UDP-N-acetyl-3-O-(1-carboxyvinyl)-alpha-D-glucosamine + NADPH + H(+). The protein operates within cell wall biogenesis; peptidoglycan biosynthesis. Its function is as follows. Cell wall formation. In Burkholderia ambifaria (strain ATCC BAA-244 / DSM 16087 / CCUG 44356 / LMG 19182 / AMMD) (Burkholderia cepacia (strain AMMD)), this protein is UDP-N-acetylenolpyruvoylglucosamine reductase.